The primary structure comprises 549 residues: GATA-type transcription factor sreA (549 aa).

The disordered stretch occupies residues alanine 40 to serine 100. Composition is skewed to basic and acidic residues over residues glycine 43–glutamate 72 and histidine 86–lysine 97. The GATA-type 1 zinc-finger motif lies at cysteine 106–cysteine 130. Positions arginine 141–glutamate 174 are disordered. Residues cysteine 180–cysteine 198 form a cystein-rich region (CRR) region. The tract at residues glycine 223–glutamate 244 is disordered. The GATA-type 2 zinc finger occupies cysteine 251–cysteine 275. Disordered regions lie at residues arginine 306–leucine 332, asparagine 375–serine 459, and leucine 482–glutamine 535. The span at serine 309–threonine 331 shows a compositional bias: low complexity. A compositionally biased stretch (pro residues) spans histidine 383–proline 396. Low complexity predominate over residues glutamine 485 to proline 497. A compositionally biased stretch (polar residues) spans leucine 498 to aspartate 515. A coiled-coil region spans residues valine 511 to glutamine 549. Over residues asparagine 516–glutamine 535 the composition is skewed to basic and acidic residues.

Its subcellular location is the nucleus. In terms of biological role, GATA-type transcription repressor that regulates iron- acquisition genes through specific binding GATA sequence elements of target promoters. Iron acquisition regulation is critical for survival under both iron-limiting conditions (to acquire essential iron) and iron-replete conditions (to limit iron toxicity). SreA targets include genes encoding a number of key iron-regulated factors such as those involved in siderophore biosynthesis. The protein is GATA-type transcription factor sreA of Emericella nidulans (strain FGSC A4 / ATCC 38163 / CBS 112.46 / NRRL 194 / M139) (Aspergillus nidulans).